The primary structure comprises 287 residues: Ventral anterior homeobox 1b (287 aa).

Residues 1 to 33 (MFEKTRDMDVRCNIEENGRISKPKDNKEIRESQ) are compositionally biased toward basic and acidic residues. The interval 1-55 (MFEKTRDMDVRCNIEENGRISKPKDNKEIRESQSKMPSTYPAPGSSEGCAKNKSS) is disordered. Positions 89–148 (PKRTRTSFTAEQLYRLEMEFQRCQYVVGRERTELARQLNLSETQVKVWFQNRRTKQKKDQ) form a DNA-binding region, homeobox.

Belongs to the EMX homeobox family.

It localises to the nucleus. Its function is as follows. Involved in ventral eye development. The polypeptide is Ventral anterior homeobox 1b (vax1-b) (Xenopus laevis (African clawed frog)).